Consider the following 279-residue polypeptide: 32 kDa beta-galactoside-binding lectin (279 aa).

Galectin domains lie at 13–144 and 152–279; these read YRSV…VHWG and YESG…IQIQ. 213-219 lines the a beta-D-galactoside pocket; sequence WGNEERE.

Post-translationally, the N-terminus is blocked.

Its function is as follows. Binds galactose. This Caenorhabditis elegans protein is 32 kDa beta-galactoside-binding lectin (lec-1).